A 151-amino-acid polypeptide reads, in one-letter code: Deoxyuridine 5'-triphosphate nucleotidohydrolase (151 aa).

Substrate-binding positions include 70 to 72 (RSG), Asn83, 87 to 89 (LID), and Met97.

This sequence belongs to the dUTPase family. Requires Mg(2+) as cofactor.

It carries out the reaction dUTP + H2O = dUMP + diphosphate + H(+). The protein operates within pyrimidine metabolism; dUMP biosynthesis; dUMP from dCTP (dUTP route): step 2/2. Functionally, this enzyme is involved in nucleotide metabolism: it produces dUMP, the immediate precursor of thymidine nucleotides and it decreases the intracellular concentration of dUTP so that uracil cannot be incorporated into DNA. The polypeptide is Deoxyuridine 5'-triphosphate nucleotidohydrolase (Hamiltonella defensa subsp. Acyrthosiphon pisum (strain 5AT)).